The following is a 362-amino-acid chain: uncharacterized protein (362 aa).

Disordered regions lie at residues 1-117, 153-172, and 210-266; these read MASK…GLNR, SSAP…GIRK, and RHFD…SSSN. Residues 12 to 23 show a composition bias toward basic and acidic residues; it reads AKKEKEIKKEIE. Residues 51–70 show a composition bias toward acidic residues; the sequence is ENDDTDGDGKEEDAQKEDDI. Composition is skewed to low complexity over residues 100–112, 153–167, and 241–265; these read NSPP…TRNT, SSAP…GSPS, and VPPS…TSSS.

This is an uncharacterized protein from Caenorhabditis elegans.